The chain runs to 70 residues: uncharacterized protein (70 aa).

The chain crosses the membrane as a helical span at residues 4-24; sequence VKTIAMLAMLVIVAALIYMGY.

Its subcellular location is the host membrane. This is an uncharacterized protein from Dryophytes versicolor (chameleon treefrog).